A 295-amino-acid chain; its full sequence is 4-hydroxy-tetrahydrodipicolinate synthase (295 aa).

Thr46 is a pyruvate binding site. Tyr134 acts as the Proton donor/acceptor in catalysis. Lys162 functions as the Schiff-base intermediate with substrate in the catalytic mechanism. Residue Ile205 coordinates pyruvate.

This sequence belongs to the DapA family. Homotetramer; dimer of dimers.

It is found in the cytoplasm. It carries out the reaction L-aspartate 4-semialdehyde + pyruvate = (2S,4S)-4-hydroxy-2,3,4,5-tetrahydrodipicolinate + H2O + H(+). It functions in the pathway amino-acid biosynthesis; L-lysine biosynthesis via DAP pathway; (S)-tetrahydrodipicolinate from L-aspartate: step 3/4. Its function is as follows. Catalyzes the condensation of (S)-aspartate-beta-semialdehyde [(S)-ASA] and pyruvate to 4-hydroxy-tetrahydrodipicolinate (HTPA). The protein is 4-hydroxy-tetrahydrodipicolinate synthase of Anaeromyxobacter dehalogenans (strain 2CP-C).